A 493-amino-acid polypeptide reads, in one-letter code: Probable vesicular acetylcholine transporter-B (493 aa).

The Cytoplasmic portion of the chain corresponds to 1-39 (MQSTGAPGLAQSAVLQLSAMGERSRELGGALREPERKRR). A helical membrane pass occupies residues 40 to 60 (LLLVVVCVALLLDNMLYMVIV). The Lumenal, vesicle portion of the chain corresponds to 61–86 (PIIPDYLADLRGERGNSSADLDIQIG). An N-linked (GlcNAc...) asparagine glycan is attached at Asn76. Residues 87–107 (VLFASKALLQLLVNPLSGTFI) traverse the membrane as a helical segment. The Cytoplasmic segment spans residues 108–113 (DRVGYD). Residues 114–134 (LPLLIGLLVMFLSTCIFAFAE) form a helical membrane-spanning segment. Residues 135 to 143 (NYGTLFAAR) are Lumenal, vesicle-facing. Residues 144–164 (SLQGLGSAFADTSGIAMIADK) traverse the membrane as a helical segment. At 165–174 (FTEEAERSRA) the chain is on the cytoplasmic side. Residues 175–195 (LGIALAFISFGSLVAPPFGGI) form a helical membrane-spanning segment. The Lumenal, vesicle portion of the chain corresponds to 196–203 (LYEFAGKR). The helical transmembrane segment at 204–224 (VPFIVLACVCLADGVLLLTVV) threads the bilayer. The Cytoplasmic segment spans residues 225 to 247 (KPFSDRTRENMPVGTPIHRLMVD). Residues 248–268 (PYIAVVAGALTVCNIPLAFLE) form a helical membrane-spanning segment. At 269-284 (PTIANWMESTMDASKW) the chain is on the lumenal, vesicle side. The helical transmembrane segment at 285–305 (QMGLVWLPAFLPHVLGVYITV) threads the bilayer. The Cytoplasmic portion of the chain corresponds to 306-315 (RLAARYPERQ). The helical transmembrane segment at 316–336 (WFYGALGMVIIGASSCTVPAC) threads the bilayer. At 337-347 (KTFGELVFPLC) the chain is on the lumenal, vesicle side. Residues 348 to 368 (GICFGIALVDTALLPTLAFLV) form a helical membrane-spanning segment. The Cytoplasmic portion of the chain corresponds to 369–378 (DVRHVSVYGS). The helical transmembrane segment at 379–399 (VYAIADISYSVAYAMGPVVAG) threads the bilayer. Over 400–406 (QIVHNLG) the chain is Lumenal, vesicle. A helical membrane pass occupies residues 407-427 (FVQLNLGMGLVNVLYAPALLL). The Cytoplasmic portion of the chain corresponds to 428–493 (LRPVCQIKPS…EEEESGPESA (66 aa)). Residues 467–493 (GLSAGAGTEHGLRGRSEEEEESGPESA) form a disordered region. The segment covering 483–493 (EEEEESGPESA) has biased composition (acidic residues).

It belongs to the major facilitator superfamily. Vesicular transporter family.

The protein resides in the membrane. Involved in acetylcholine transport into synaptic vesicles. This Danio rerio (Zebrafish) protein is Probable vesicular acetylcholine transporter-B (slc18a3b).